The following is a 199-amino-acid chain: Glycerol-3-phosphate acyltransferase (199 aa).

Transmembrane regions (helical) follow at residues 3–23, 55–75, 79–99, 113–133, and 155–175; these read IKILYIIITYLCGSIPSAYIV, VITLIADILKGFIPVYFATFI, FSYSVAVAAAAMVGHVFTIFL, VFFALMRWPSLIALAIFGLAF, and YFLGYSTEVVIFTFAITLLII.

This sequence belongs to the PlsY family. As to quaternary structure, probably interacts with PlsX.

The protein resides in the cell inner membrane. It carries out the reaction an acyl phosphate + sn-glycerol 3-phosphate = a 1-acyl-sn-glycero-3-phosphate + phosphate. It functions in the pathway lipid metabolism; phospholipid metabolism. Its function is as follows. Catalyzes the transfer of an acyl group from acyl-phosphate (acyl-PO(4)) to glycerol-3-phosphate (G3P) to form lysophosphatidic acid (LPA). This enzyme utilizes acyl-phosphate as fatty acyl donor, but not acyl-CoA or acyl-ACP. The polypeptide is Glycerol-3-phosphate acyltransferase (Endomicrobium trichonymphae).